Here is a 141-residue protein sequence, read N- to C-terminus: Sperm protein associated with the nucleus on the X chromosome N3 (141 aa).

Positions 1–10 (MEQPTSSTNG) are enriched in polar residues. 2 disordered regions span residues 1-47 (MEQP…TKTS) and 66-141 (NQLE…SGED). Positions 11–26 (EKTKSPCESNNKKNDE) are enriched in basic and acidic residues. A compositionally biased stretch (polar residues) spans 66–80 (NQLENEQSQENSINP). Positions 84-103 (EEDEGVDLSEGSSNEDEDLG) are enriched in acidic residues. Over residues 132–141 (EGSSQDSGED) the composition is skewed to polar residues.

It belongs to the SPAN-X family.

The sequence is that of Sperm protein associated with the nucleus on the X chromosome N3 (SPANXN3) from Homo sapiens (Human).